A 234-amino-acid polypeptide reads, in one-letter code: uncharacterized protein (234 aa).

The segment at 65–89 (QNANRQEGRRRGLRPSSDGNLRREN) is disordered. The RING-type zinc-finger motif lies at 185 to 220 (CAVCLHNKVCVLFQKCKHVITCGPCSLRIKECPVCK).

It belongs to the IIV-6 175R/332L family.

This is an uncharacterized protein from Acheta domesticus (House cricket).